The following is a 179-amino-acid chain: Inner membrane-spanning protein YciB (179 aa).

Helical transmembrane passes span 22 to 42 (IYAA…YSWV), 50 to 70 (MALI…FFHN), 76 to 96 (WKVT…QWVM), 121 to 141 (LAWA…AFWL), and 149 to 169 (FKVF…GIYI).

It belongs to the YciB family.

The protein resides in the cell inner membrane. In terms of biological role, plays a role in cell envelope biogenesis, maintenance of cell envelope integrity and membrane homeostasis. This Klebsiella pneumoniae (strain 342) protein is Inner membrane-spanning protein YciB.